A 249-amino-acid chain; its full sequence is 1-(5-phosphoribosyl)-5-[(5-phosphoribosylamino)methylideneamino] imidazole-4-carboxamide isomerase (249 aa).

Asp-8 acts as the Proton acceptor in catalysis. The active-site Proton donor is Asp-131.

This sequence belongs to the HisA/HisF family.

The protein resides in the cytoplasm. It catalyses the reaction 1-(5-phospho-beta-D-ribosyl)-5-[(5-phospho-beta-D-ribosylamino)methylideneamino]imidazole-4-carboxamide = 5-[(5-phospho-1-deoxy-D-ribulos-1-ylimino)methylamino]-1-(5-phospho-beta-D-ribosyl)imidazole-4-carboxamide. Its pathway is amino-acid biosynthesis; L-histidine biosynthesis; L-histidine from 5-phospho-alpha-D-ribose 1-diphosphate: step 4/9. The protein is 1-(5-phosphoribosyl)-5-[(5-phosphoribosylamino)methylideneamino] imidazole-4-carboxamide isomerase of Aromatoleum aromaticum (strain DSM 19018 / LMG 30748 / EbN1) (Azoarcus sp. (strain EbN1)).